A 210-amino-acid chain; its full sequence is Small ribosomal subunit protein eS8y (210 aa).

Residues 1–22 (MGISRDSIHKRRATGGKQKMWR) form a disordered region. Residues 8-22 (IHKRRATGGKQKMWR) are compositionally biased toward basic residues.

Belongs to the eukaryotic ribosomal protein eS8 family.

In Arabidopsis thaliana (Mouse-ear cress), this protein is Small ribosomal subunit protein eS8y (RPS8B).